The chain runs to 397 residues: Serine/threonine-protein kinase 17A (397 aa).

A disordered region spans residues Met1 to Gly23. Phosphoserine is present on Ser9. One can recognise a Protein kinase domain in the interval Leu44–Leu304. ATP-binding positions include Leu50 to Val58 and Lys73. Asp169 acts as the Proton acceptor in catalysis.

Belongs to the protein kinase superfamily. CAMK Ser/Thr protein kinase family. DAP kinase subfamily. Autophosphorylated. Highly expressed in bone marrow. Lower levels in brain, heart, lung, liver and kidney.

Its subcellular location is the nucleus. It carries out the reaction L-seryl-[protein] + ATP = O-phospho-L-seryl-[protein] + ADP + H(+). The enzyme catalyses L-threonyl-[protein] + ATP = O-phospho-L-threonyl-[protein] + ADP + H(+). With respect to regulation, inhibited by thiazolidinedione-type compounds: inhibited by furan- and pyridone- thiazolidinediones. Its function is as follows. Acts as a positive regulator of apoptosis. May also act as a regulator of cellular reactive oxygen species. The chain is Serine/threonine-protein kinase 17A (STK17A) from Oryctolagus cuniculus (Rabbit).